A 156-amino-acid chain; its full sequence is Small ribosomal subunit protein uS7 (156 aa).

It belongs to the universal ribosomal protein uS7 family. In terms of assembly, part of the 30S ribosomal subunit. Contacts proteins S9 and S11.

One of the primary rRNA binding proteins, it binds directly to 16S rRNA where it nucleates assembly of the head domain of the 30S subunit. Is located at the subunit interface close to the decoding center, probably blocks exit of the E-site tRNA. This chain is Small ribosomal subunit protein uS7, found in Citrifermentans bemidjiense (strain ATCC BAA-1014 / DSM 16622 / JCM 12645 / Bem) (Geobacter bemidjiensis).